A 139-amino-acid chain; its full sequence is GSK3-beta interaction protein (139 aa).

The disordered stretch occupies residues 1–22 (METDCNPMELSSMSGFEEGSEL). The tract at residues 41–45 (VNDVL) is required for PRKAR2A interaction; contributes to a protective effect against H(2)O(2)-induced apoptosis. The interaction with GSK3B and acts as a GSK3B inhibitor stretch occupies residues 115–139 (SPAYREAFGNALLQRLEALKRDGQS).

Belongs to the GSKIP family. Forms a complex composed of PRKAR2A or PRKAR2B, GSK3B and GSKIP through GSKIP interaction; facilitates PKA-induced phosphorylation of GSK3B leading to GSK3B inactivation; recruits DNM1L through GSK3B for PKA-mediated phosphorylation of DNM1L; promotes beta-catenin degradation through GSK3B-induced phosphorylation of beta-catenin; stabilizes beta-catenin and enhances Wnt-induced signaling through PKA-induced phosphorylation of beta-catenin. Interacts with GSK3B; induces GSK3B-mediated phosphorylation of GSKIP and inhibits GSK3B kinase activity. In terms of processing, phosphorylated by GSK3B.

It localises to the cytoplasm. Its subcellular location is the nucleus. A-kinase anchoring protein for GSK3B and PKA that regulates or facilitates their kinase activity towards their targets. The ternary complex enhances Wnt-induced signaling by facilitating the GSK3B- and PKA-induced phosphorylation of beta-catenin leading to beta-catenin degradation and stabilization respectively. Upon cAMP activation, the ternary complex contributes to neuroprotection against oxidative stress-induced apoptosis by facilitating the PKA-induced phosphorylation of DML1 and PKA-induced inactivation of GSK3B. During neurite outgrowth promotes neuron proliferation; while increases beta-catenin-induced transcriptional activity through GSK3B kinase activity inhibition, reduces N-cadherin level to promote cell cycle progression. May play a role in cleft palate formation and is required for postnatal life through modulation of the activity of GSK3B during development. The protein is GSK3-beta interaction protein of Macaca fascicularis (Crab-eating macaque).